A 295-amino-acid polypeptide reads, in one-letter code: Aspartate carbamoyltransferase catalytic subunit (295 aa).

The carbamoyl phosphate site is built by Arg-54 and Thr-55. Lys-82 lines the L-aspartate pocket. The carbamoyl phosphate site is built by Arg-104, His-132, and Gln-135. Arg-165 and Arg-218 together coordinate L-aspartate. Gly-257 and Pro-258 together coordinate carbamoyl phosphate.

Belongs to the aspartate/ornithine carbamoyltransferase superfamily. ATCase family. Heterododecamer (2C3:3R2) of six catalytic PyrB chains organized as two trimers (C3), and six regulatory PyrI chains organized as three dimers (R2).

The enzyme catalyses carbamoyl phosphate + L-aspartate = N-carbamoyl-L-aspartate + phosphate + H(+). It functions in the pathway pyrimidine metabolism; UMP biosynthesis via de novo pathway; (S)-dihydroorotate from bicarbonate: step 2/3. Catalyzes the condensation of carbamoyl phosphate and aspartate to form carbamoyl aspartate and inorganic phosphate, the committed step in the de novo pyrimidine nucleotide biosynthesis pathway. This Wolbachia pipientis wMel protein is Aspartate carbamoyltransferase catalytic subunit.